The following is a 289-amino-acid chain: ATP synthase gamma chain (289 aa).

The protein belongs to the ATPase gamma chain family. As to quaternary structure, F-type ATPases have 2 components, CF(1) - the catalytic core - and CF(0) - the membrane proton channel. CF(1) has five subunits: alpha(3), beta(3), gamma(1), delta(1), epsilon(1). CF(0) has three main subunits: a, b and c.

It is found in the cell membrane. In terms of biological role, produces ATP from ADP in the presence of a proton gradient across the membrane. The gamma chain is believed to be important in regulating ATPase activity and the flow of protons through the CF(0) complex. The polypeptide is ATP synthase gamma chain (Lactococcus lactis subsp. cremoris (strain SK11)).